The sequence spans 198 residues: Transcription factor IND (198 aa).

A disordered region spans residues 1–33 (MENGMYKKKGVCDSCVSSKSRSNHSPKRSMMEP). The bHLH domain occupies 118-167 (ISDDPQTVVARRRRERISEKIRILKRIVPGGAKMDTASMLDEAIRYTKFL).

As to quaternary structure, homodimer. Heterodimer; possibly with ALC. As to expression, after fertilization, it is expressed in stripes about four cells wide at the margins of developing wild-type fruit. Also expressed in the inner valve layer, which becomes lignified later in fruit development. Detected in roots.

It localises to the nucleus. Functionally, transcription regulator required for seed dispersal. Involved in the differentiation of all three cell types required for fruit dehiscence. Acts as the key regulator in a network including SHP and ALC that controls specification of the valve margin. Works with ALC, SHP, and FUL to allow differentiation of the lignified valve layer, the spring-loaded mechanism of fruit that promotes opening. Regulates the expression of the YJ80 marker. The chain is Transcription factor IND (IND) from Arabidopsis thaliana (Mouse-ear cress).